The following is a 142-amino-acid chain: Movement protein (142 aa).

The segment at 1–142 (MDLPEDQARF…LDRSESLSRY (142 aa)) is disordered. Polar residues-rich tracts occupy residues 9-22 (RFTNSYSLRTTSME) and 33-43 (LYQSASRSQMA). Over residues 50 to 62 (SIISRTSSWRTSP) the composition is skewed to low complexity. Polar residues-rich tracts occupy residues 74-95 (MNSILTSRTQQSSPKLTNSASP) and 113-124 (TTLQRTNSGFST). The span at 125–142 (KETEMPRLLDRSESLSRY) shows a compositional bias: basic and acidic residues.

Belongs to the luteoviruses movement protein family.

In terms of biological role, transports viral genome to neighboring plant cells directly through plasmosdesmata, without any budding. The movement protein allows efficient cell to cell propagation, by bypassing the host cell wall barrier. In Cicer arietinum (Chickpea), this protein is Movement protein.